The sequence spans 328 residues: Alanine racemase (328 aa).

K33 functions as the Proton acceptor; specific for D-alanine in the catalytic mechanism. The residue at position 33 (K33) is an N6-(pyridoxal phosphate)lysine. R118 serves as a coordination point for substrate. The Proton acceptor; specific for L-alanine role is filled by Y237. Residue M283 coordinates substrate.

This sequence belongs to the alanine racemase family. It depends on pyridoxal 5'-phosphate as a cofactor.

The catalysed reaction is L-alanine = D-alanine. The protein operates within amino-acid biosynthesis; D-alanine biosynthesis; D-alanine from L-alanine: step 1/1. In terms of biological role, catalyzes the interconversion of L-alanine and D-alanine. May also act on other amino acids. The chain is Alanine racemase (alr) from Campylobacter jejuni subsp. jejuni serotype O:2 (strain ATCC 700819 / NCTC 11168).